A 522-amino-acid polypeptide reads, in one-letter code: 2-isopropylmalate synthase (522 aa).

Residues 5-267 (VIIFDTTLRD…DCGINAKEIH (263 aa)) enclose the Pyruvate carboxyltransferase domain. Positions 14, 202, 204, and 238 each coordinate Mn(2+). Positions 392–522 (QLQHMMVHSD…IHKERELGGV (131 aa)) are regulatory domain.

It belongs to the alpha-IPM synthase/homocitrate synthase family. LeuA type 1 subfamily. Homodimer. Requires Mn(2+) as cofactor.

The protein resides in the cytoplasm. The enzyme catalyses 3-methyl-2-oxobutanoate + acetyl-CoA + H2O = (2S)-2-isopropylmalate + CoA + H(+). The protein operates within amino-acid biosynthesis; L-leucine biosynthesis; L-leucine from 3-methyl-2-oxobutanoate: step 1/4. Functionally, catalyzes the condensation of the acetyl group of acetyl-CoA with 3-methyl-2-oxobutanoate (2-ketoisovalerate) to form 3-carboxy-3-hydroxy-4-methylpentanoate (2-isopropylmalate). The polypeptide is 2-isopropylmalate synthase (Shewanella frigidimarina (strain NCIMB 400)).